The primary structure comprises 72 residues: Translation initiation factor IF-1 (72 aa).

Positions 1–72 (MSKEDSFEME…SKGRITYRAR (72 aa)) constitute an S1-like domain.

This sequence belongs to the IF-1 family. In terms of assembly, component of the 30S ribosomal translation pre-initiation complex which assembles on the 30S ribosome in the order IF-2 and IF-3, IF-1 and N-formylmethionyl-tRNA(fMet); mRNA recruitment can occur at any time during PIC assembly.

It is found in the cytoplasm. Its function is as follows. One of the essential components for the initiation of protein synthesis. Stabilizes the binding of IF-2 and IF-3 on the 30S subunit to which N-formylmethionyl-tRNA(fMet) subsequently binds. Helps modulate mRNA selection, yielding the 30S pre-initiation complex (PIC). Upon addition of the 50S ribosomal subunit IF-1, IF-2 and IF-3 are released leaving the mature 70S translation initiation complex. The polypeptide is Translation initiation factor IF-1 (Pseudomonas savastanoi pv. phaseolicola (strain 1448A / Race 6) (Pseudomonas syringae pv. phaseolicola (strain 1448A / Race 6))).